The following is a 621-amino-acid chain: Membrane protein insertase YidC (621 aa).

The next 6 membrane-spanning stretches (helical) occupy residues 1–21, 363–383, 436–456, 486–506, 527–547, and 549–569; these read MDKNTLVGFALIGAVVIGFSI, GWGLSMGVVLLLMTIIVKVLV, MGGCLPMLIQMPVFMALFFFV, IPLLGNHLSLFCLLFSITNIL, LMMYIMPVMFIFIFNGYSSGL, and YYYFISGLIGILTMVILRKTT.

This sequence belongs to the OXA1/ALB3/YidC family. Type 1 subfamily. In terms of assembly, interacts with the Sec translocase complex via SecD. Specifically interacts with transmembrane segments of nascent integral membrane proteins during membrane integration.

The protein resides in the cell inner membrane. Functionally, required for the insertion and/or proper folding and/or complex formation of integral membrane proteins into the membrane. Involved in integration of membrane proteins that insert both dependently and independently of the Sec translocase complex, as well as at least some lipoproteins. Aids folding of multispanning membrane proteins. The protein is Membrane protein insertase YidC of Phocaeicola vulgatus (strain ATCC 8482 / DSM 1447 / JCM 5826 / CCUG 4940 / NBRC 14291 / NCTC 11154) (Bacteroides vulgatus).